The following is a 420-amino-acid chain: Glucose-1-phosphate adenylyltransferase (420 aa).

Alpha-D-glucose 1-phosphate is bound by residues Y107, G173, 188–189 (EK), and S206.

It belongs to the bacterial/plant glucose-1-phosphate adenylyltransferase family. In terms of assembly, homotetramer.

It carries out the reaction alpha-D-glucose 1-phosphate + ATP + H(+) = ADP-alpha-D-glucose + diphosphate. Its pathway is glycan biosynthesis; glycogen biosynthesis. In terms of biological role, involved in the biosynthesis of ADP-glucose, a building block required for the elongation reactions to produce glycogen. Catalyzes the reaction between ATP and alpha-D-glucose 1-phosphate (G1P) to produce pyrophosphate and ADP-Glc. The sequence is that of Glucose-1-phosphate adenylyltransferase from Shewanella baltica (strain OS185).